A 676-amino-acid chain; its full sequence is Protein kinase C delta type (676 aa).

Residues 1-106 form the C2 domain; it reads MAPFLRIAFN…KNNGKAEFWL (106 aa). A phosphothreonine mark is found at Thr-43 and Thr-50. Tyr-64 bears the Phosphotyrosine mark. Ser-130 carries the phosphoserine modification. Residue Thr-141 is modified to Phosphothreonine. At Tyr-155 the chain carries Phosphotyrosine. A Phorbol-ester/DAG-type 1 zinc finger spans residues 158–208; it reads NHEFIATFFGQPTFCSVCKDFVWGLNKQGYKCRQCNAAIHKKCIDKIIGRC. The residue at position 218 (Thr-218) is a Phosphothreonine. The Phorbol-ester/DAG-type 2 zinc finger occupies 230-280; sequence PHRFKVHNYMSPTFCDHCGSLLWGLVKQGLKCEDCGMNVHHKCREKVANLC. Ser-299, Ser-302, and Ser-304 each carry phosphoserine; by autocatalysis. Ser-307 is subject to Phosphoserine. Position 313 is a phosphotyrosine (Tyr-313). Position 334 is a phosphotyrosine; by SRC (Tyr-334). The region spanning 349 to 603 is the Protein kinase domain; the sequence is FIFHKVLGKG…TGNIKIHPFF (255 aa). 355-363 lines the ATP pocket; sequence LGKGSFGKV. Tyr-374 is subject to Phosphotyrosine. Lys-378 contributes to the ATP binding site. Position 451 is a phosphothreonine (Thr-451). Residue Asp-473 is the Proton acceptor of the active site. Phosphoserine occurs at positions 503 and 506. Position 507 is a phosphothreonine; by autocatalysis (Thr-507). A Phosphotyrosine modification is found at Tyr-567. Residues 604 to 675 enclose the AGC-kinase C-terminal domain; that stretch reads KTINWTLLEK…VNPKFEHLLE (72 aa). A phosphoserine mark is found at Ser-645, Ser-654, Ser-658, and Ser-664.

It belongs to the protein kinase superfamily. AGC Ser/Thr protein kinase family. PKC subfamily. Interacts with PDPK1 (via N-terminal region). Interacts with RAD9A. Interacts with CDCP1. Interacts with MUC1. Interacts with VASP. Interacts with CAVIN3. Interacts with PRKD2 (via N-terminus and zing-finger domain 1 and 2) in response to oxidative stress; the interaction is independent of PRKD2 tyrosine phosphorylation. Interacts with PLSC3; interaction is enhanced by UV irradiation. Interacts with PRKCH upstream open reading frame 2; the interaction leads to inhibition of kinase activity. In terms of processing, autophosphorylated and/or phosphorylated at Thr-507, within the activation loop; phosphorylation at Thr-507 is not a prerequisite for enzymatic activity. Autophosphorylated at Ser-299, Ser-302 and Ser-304. Upon TNFSF10/TRAIL treatment, phosphorylated at Tyr-155; phosphorylation is required for its translocation to the endoplasmic reticulum and cleavage by caspase-3. Phosphorylated at Tyr-313, Tyr-334 and Tyr-567; phosphorylation of Tyr-313 and Tyr-567 following thrombin or zymosan stimulation potentiates its kinase activity. Phosphorylated by protein kinase PDPK1; phosphorylation is inhibited by the apoptotic C-terminal cleavage product of PKN2. Phosphorylated at Tyr-313 through a SYK and SRC mechanism downstream of C-type lectin receptors activation, promoting its activation. Proteolytically cleaved into a catalytic subunit and a regulatory subunit by caspase-3 during apoptosis which results in kinase activation.

The protein localises to the cytoplasm. The protein resides in the perinuclear region. It localises to the nucleus. Its subcellular location is the cell membrane. It is found in the mitochondrion. The protein localises to the endomembrane system. The enzyme catalyses L-seryl-[protein] + ATP = O-phospho-L-seryl-[protein] + ADP + H(+). It catalyses the reaction L-threonyl-[protein] + ATP = O-phospho-L-threonyl-[protein] + ADP + H(+). It carries out the reaction L-tyrosyl-[protein] + ATP = O-phospho-L-tyrosyl-[protein] + ADP + H(+). With respect to regulation, novel PKCs (PRKCD, PRKCE, PRKCH and PRKCQ) are calcium-insensitive, but activated by diacylglycerol (DAG) and phosphatidylserine. Three specific sites; Thr-507 (activation loop of the kinase domain), Ser-645 (turn motif) and Ser-664 (hydrophobic region), need to be phosphorylated for its full activation. Activated by caspase-3 (CASP3) cleavage during apoptosis. After cleavage, the pseudosubstrate motif in the regulatory subunit is released from the substrate recognition site of the catalytic subunit, which enables PRKCD to become constitutively activated. The catalytic subunit which displays properties of a sphingosine-dependent protein kinase is activated by D-erythro-sphingosine (Sph) or N,N-dimethyl-D-erythrosphingosine (DMS) or N,N,N-trimethyl-D-erythrosphingosine (TMS), but not by ceramide or Sph-1-P and is strongly inhibited by phosphatidylserine. Inhibited by PRKCH upstream open reading frame 2. In terms of biological role, calcium-independent, phospholipid- and diacylglycerol (DAG)-dependent serine/threonine-protein kinase that plays contrasting roles in cell death and cell survival by functioning as a pro-apoptotic protein during DNA damage-induced apoptosis, but acting as an anti-apoptotic protein during cytokine receptor-initiated cell death, is involved in tumor suppression as well as survival of several cancers, is required for oxygen radical production by NADPH oxidase and acts as positive or negative regulator in platelet functional responses. Negatively regulates B cell proliferation and also has an important function in self-antigen induced B cell tolerance induction. Upon DNA damage, activates the promoter of the death-promoting transcription factor BCLAF1/Btf to trigger BCLAF1-mediated p53/TP53 gene transcription and apoptosis. In response to oxidative stress, interact with and activate CHUK/IKKA in the nucleus, causing the phosphorylation of p53/TP53. In the case of ER stress or DNA damage-induced apoptosis, can form a complex with the tyrosine-protein kinase ABL1 which trigger apoptosis independently of p53/TP53. In cytosol can trigger apoptosis by activating MAPK11 or MAPK14, inhibiting AKT1 and decreasing the level of X-linked inhibitor of apoptosis protein (XIAP), whereas in nucleus induces apoptosis via the activation of MAPK8 or MAPK9. Upon ionizing radiation treatment, is required for the activation of the apoptosis regulators BAX and BAK, which trigger the mitochondrial cell death pathway. Can phosphorylate MCL1 and target it for degradation which is sufficient to trigger for BAX activation and apoptosis. Is required for the control of cell cycle progression both at G1/S and G2/M phases. Mediates phorbol 12-myristate 13-acetate (PMA)-induced inhibition of cell cycle progression at G1/S phase by up-regulating the CDK inhibitor CDKN1A/p21 and inhibiting the cyclin CCNA2 promoter activity. In response to UV irradiation can phosphorylate CDK1, which is important for the G2/M DNA damage checkpoint activation. Can protect glioma cells from the apoptosis induced by TNFSF10/TRAIL, probably by inducing increased phosphorylation and subsequent activation of AKT1. Is highly expressed in a number of cancer cells and promotes cell survival and resistance against chemotherapeutic drugs by inducing cyclin D1 (CCND1) and hyperphosphorylation of RB1, and via several pro-survival pathways, including NF-kappa-B, AKT1 and MAPK1/3 (ERK1/2). Involved in antifungal immunity by mediating phosphorylation and activation of CARD9 downstream of C-type lectin receptors activation, promoting interaction between CARD9 and BCL10, followed by activation of NF-kappa-B and MAP kinase p38 pathways. Can also act as tumor suppressor upon mitogenic stimulation with PMA or TPA. In N-formyl-methionyl-leucyl-phenylalanine (fMLP)-treated cells, is required for NCF1 (p47-phox) phosphorylation and activation of NADPH oxidase activity, and regulates TNF-elicited superoxide anion production in neutrophils, by direct phosphorylation and activation of NCF1 or indirectly through MAPK1/3 (ERK1/2) signaling pathways. May also play a role in the regulation of NADPH oxidase activity in eosinophil after stimulation with IL5, leukotriene B4 or PMA. In collagen-induced platelet aggregation, acts a negative regulator of filopodia formation and actin polymerization by interacting with and negatively regulating VASP phosphorylation. Downstream of PAR1, PAR4 and CD36/GP4 receptors, regulates differentially platelet dense granule secretion; acts as a positive regulator in PAR-mediated granule secretion, whereas it negatively regulates CD36/GP4-mediated granule release. Phosphorylates MUC1 in the C-terminal and regulates the interaction between MUC1 and beta-catenin. The catalytic subunit phosphorylates 14-3-3 proteins (YWHAB, YWHAZ and YWHAH) in a sphingosine-dependent fashion. Phosphorylates ELAVL1 in response to angiotensin-2 treatment. Phosphorylates mitochondrial phospholipid scramblase 3 (PLSCR3), resulting in increased cardiolipin expression on the mitochondrial outer membrane which facilitates apoptosis. Phosphorylates SMPD1 which induces SMPD1 secretion. This chain is Protein kinase C delta type, found in Homo sapiens (Human).